The sequence spans 542 residues: MSGLNIYFILQICSHTDTYFFIYSLSITLFFFSKYKMGVCISHEYSKPNAEQAEILQDFSKFMKPEERPPMAVEHQMYDYRLVEEEQDDELFAIVCCPHSIGYERDKIALVDLDPTSETFCTILSEVHLTSNGDEPGRMNWAKSAESLGEMNKFVRRNIIVPCMNSGKIYVIAFENEKLWIEKEIRNDELIRKDVSCPYAVRSLPLKGAPVHVSTLGDRFGNGKGDFILIDRRTWEVRKKSEPTFSDYGGDFSLQPRHNLMISSEWGHPRLLRDGFMPSELENVSESFGARLHVWQISPPKLIQSINLDTCDGSLVICVKFLHNADCNHAFAISAIGSSIFHLHMNTLTKEWAADRVAHVPLLKVENWQSDEMPALLTDMIISMDDRWLYVCGFLHGVLWRFDIQDPFRVSLHGKINLGGIFDSFPEVRIKTSNAMEDRWWLPPETRSLPRGTKFRGGPALMQLSKDGCRLYVCNSFYKAWDAQFYPELISDGGQMIRVDIVDDEMQLNEKFLIDMKGQPNGPFVIRDIKFLDGDCTSDSFL.

The protein belongs to the selenium-binding protein family.

The chain is Putative selenium-binding protein from Caenorhabditis elegans.